The primary structure comprises 310 residues: Thioredoxin reductase (310 aa).

Residue 34–41 participates in FAD binding; that stretch reads NGIQPGGQ. Cysteines 135 and 138 form a disulfide. Position 281–290 (281–290) interacts with FAD; that stretch reads DVQDKIYRQA.

The protein belongs to the class-II pyridine nucleotide-disulfide oxidoreductase family. In terms of assembly, homodimer. FAD is required as a cofactor.

Its subcellular location is the cytoplasm. The enzyme catalyses [thioredoxin]-dithiol + NADP(+) = [thioredoxin]-disulfide + NADPH + H(+). The polypeptide is Thioredoxin reductase (trxB) (Rickettsia bellii (strain RML369-C)).